Here is a 162-residue protein sequence, read N- to C-terminus: MIIFGVDPGFGILGYGVLSVSGNSFQHVSHGTIQTEKQQNIALRLKVLYEELSNVIDNFKPSEIAMEKLFFSRNITTAISVGEARGIVLLLAAQRNIPVFEYTPHEIKKAVTGSGKASKKDVQQMIKILLNLKELPKPDDAADGLAIAWCHCAVRNITRRFS.

Residues D7, E67, and D140 contribute to the active site. Mg(2+) is bound by residues D7, E67, and D140.

Belongs to the RuvC family. In terms of assembly, homodimer which binds Holliday junction (HJ) DNA. The HJ becomes 2-fold symmetrical on binding to RuvC with unstacked arms; it has a different conformation from HJ DNA in complex with RuvA. In the full resolvosome a probable DNA-RuvA(4)-RuvB(12)-RuvC(2) complex forms which resolves the HJ. Mg(2+) is required as a cofactor.

It is found in the cytoplasm. The enzyme catalyses Endonucleolytic cleavage at a junction such as a reciprocal single-stranded crossover between two homologous DNA duplexes (Holliday junction).. Its function is as follows. The RuvA-RuvB-RuvC complex processes Holliday junction (HJ) DNA during genetic recombination and DNA repair. Endonuclease that resolves HJ intermediates. Cleaves cruciform DNA by making single-stranded nicks across the HJ at symmetrical positions within the homologous arms, yielding a 5'-phosphate and a 3'-hydroxyl group; requires a central core of homology in the junction. The consensus cleavage sequence is 5'-(A/T)TT(C/G)-3'. Cleavage occurs on the 3'-side of the TT dinucleotide at the point of strand exchange. HJ branch migration catalyzed by RuvA-RuvB allows RuvC to scan DNA until it finds its consensus sequence, where it cleaves and resolves the cruciform DNA. This is Crossover junction endodeoxyribonuclease RuvC from Pseudothermotoga lettingae (strain ATCC BAA-301 / DSM 14385 / NBRC 107922 / TMO) (Thermotoga lettingae).